We begin with the raw amino-acid sequence, 335 residues long: Fimbrial adhesin PapGIII (335 aa).

Positions 1–21 are cleaved as a signal peptide; the sequence is MKKWLPAFLFLSLSGCNDALA.

It belongs to the adhesin PapG family.

It localises to the secreted. It is found in the fimbrium. Tip adhesin component of type P pili that binds preferentially to Gal-alpha(1-4)-Gal-containing glycolipids such as globoside. This tip is common in E.coli strains that cause human cystitis, but rare in pyelonephritic isolates. In Escherichia coli, this protein is Fimbrial adhesin PapGIII.